The sequence spans 170 residues: MLSNTILSRSFYKRDTLCVAKDLLGKVLKFADYYGVINEVEAYIGQDDPACHAARGYTPRTAAMFGAAGFSYVYLIYGMYHCLNIVTEREGFPAAVLIRGIDLYKPTVLSLNGPGKLCKKLNITKNNNKIDLTQSHGFCVYNTTARPEYMATPRIGIKVGTDKLWRFKSM.

It belongs to the DNA glycosylase MPG family.

In Sodalis glossinidius, this protein is Putative 3-methyladenine DNA glycosylase.